We begin with the raw amino-acid sequence, 269 residues long: Troponin I (269 aa).

The disordered stretch occupies residues 1 to 104 (MADDEKKAAA…AKKGFMTPER (104 aa)). A2 bears the N-acetylalanine mark. Low complexity predominate over residues 9 to 50 (AAPAAAPAAAAKPAAPAAAPAANGKAAPAANGKAAPAAAAAP). Residues 56–91 (DPNDPKVKAEEAKKAKQAEIERKRAEVRKRMEEASK) are compositionally biased toward basic and acidic residues. The tract at residues 162 to 171 (ERMYICEGQK) is troponin T-interaction. The interval 189-202 (NAQVNDLRGKFVKP) is actin-binding. Residues K201 and K205 each carry the N6,N6,N6-trimethyllysine modification. The tract at residues 239 to 269 (TLEEEEKEKKPDWSKGKPGDAKVKEEVEAEA) is disordered.

It belongs to the troponin I family. Binds to actin and tropomyosin. As to expression, all isoforms are expressed in somatic muscle. Isoforms containing exon 6a1 (isoforms 1 and 2) are expressed in all muscles but highest expression is in abdominal muscle and splanchnic muscle of the gut. Isoforms containing exon 6b1 (isoforms 5, 6, 9 and 10) are highly expressed in the tergal depressor of trochanter (TDT) muscle.

In terms of biological role, troponin I is the ATPase inhibitory subunit of troponin in the thin filament regulatory complex. Involved in the development and maintenance of muscle and nervous system. May also be involved in the cytoskeletal apparatus. This Drosophila melanogaster (Fruit fly) protein is Troponin I (wupA).